A 360-amino-acid polypeptide reads, in one-letter code: Mannose-1-phosphate guanylyltransferase catalytic subunit beta (360 aa).

Residues 2 to 222 (KALILVGGYG…QGFWMDIGQP (221 aa)) form a substrate-binding domain region. GDP-alpha-D-mannose is bound at residue Asp-110. Asp-110 serves as a coordination point for Mg(2+). Residue Lys-162 is part of the active site. Asp-218 contacts GDP-alpha-D-mannose. Residue Asp-218 participates in Mg(2+) binding. Positions 245–360 (RAGPGFLGNV…DSVPEPRIIM (116 aa)) are hexapeptide repeat domain.

The protein belongs to the transferase hexapeptide repeat family. In terms of assembly, component of the GMPPA-GMPPB mannose-1-phosphate guanylyltransferase complex composed of 4 gmppa subunits and 8 gmppb subunits; the complex is organized into three layers, a central layer made up of 2 gmppa dimers sandwiched between two layers each made up of 2 gmppb dimers. Catalytic activity of gmppb is reduced when part of the complex and binding of GDP-alpha-D-Mannose by gmppa induces allosteric feedback inhibition of gmppb. Mg(2+) serves as cofactor.

The enzyme catalyses alpha-D-mannose 1-phosphate + GTP + H(+) = GDP-alpha-D-mannose + diphosphate. It functions in the pathway nucleotide-sugar biosynthesis; GDP-alpha-D-mannose biosynthesis; GDP-alpha-D-mannose from alpha-D-mannose 1-phosphate (GTP route): step 1/1. Its activity is regulated as follows. Enzyme activity is reduced by incorporation into the GMPPA-GMPPB mannose-1-phosphate guanylyltransferase complex. Allosterically inhibited, when part of the GMPPA-GMPPB complex, by GDP-alpha-D-mannose binding to GMPPA. In terms of biological role, catalytic subunit of the GMPPA-GMPPB mannose-1-phosphate guanylyltransferase complex. Catalyzes the formation of GDP-mannose, an essential precursor of glycan moieties of glycoproteins and glycolipids. Can catalyze the reverse reaction in vitro. Together with GMPPA regulates GDP-alpha-D-mannose levels. The chain is Mannose-1-phosphate guanylyltransferase catalytic subunit beta (gmppb) from Danio rerio (Zebrafish).